The chain runs to 396 residues: S-adenosylmethionine synthase (396 aa).

Residue His16 participates in ATP binding. Asp18 serves as a coordination point for Mg(2+). Position 44 (Glu44) interacts with K(+). L-methionine is bound by residues Glu57 and Gln100. The tract at residues 100–110 is flexible loop; that stretch reads QSVDIAQGVDR. Residues 165 to 167, Asp240, 246 to 247, Ala263, and Lys267 each bind ATP; these read DAK and RK. Asp240 contributes to the L-methionine binding site. L-methionine is bound at residue Lys271.

The protein belongs to the AdoMet synthase family. As to quaternary structure, homotetramer; dimer of dimers. Mg(2+) serves as cofactor. The cofactor is K(+).

The protein resides in the cytoplasm. The catalysed reaction is L-methionine + ATP + H2O = S-adenosyl-L-methionine + phosphate + diphosphate. It functions in the pathway amino-acid biosynthesis; S-adenosyl-L-methionine biosynthesis; S-adenosyl-L-methionine from L-methionine: step 1/1. In terms of biological role, catalyzes the formation of S-adenosylmethionine (AdoMet) from methionine and ATP. The overall synthetic reaction is composed of two sequential steps, AdoMet formation and the subsequent tripolyphosphate hydrolysis which occurs prior to release of AdoMet from the enzyme. The chain is S-adenosylmethionine synthase from Pseudomonas savastanoi pv. phaseolicola (strain 1448A / Race 6) (Pseudomonas syringae pv. phaseolicola (strain 1448A / Race 6)).